Consider the following 284-residue polypeptide: Tropomyosin alpha-3 chain (284 aa).

Methionine 1 is modified (N-acetylmethionine). The segment at 1 to 43 is disordered; it reads MEAIKKKMQMLKLDKENALDRAEQAEAEQKQAEERSKQLEDEL. Residues 1-284 adopt a coiled-coil conformation; that stretch reads MEAIKKKMQM…DHALNDMTSI (284 aa). Glutamate 2 carries the N-acetylalanine modification. The span at 12–40 shows a compositional bias: basic and acidic residues; that stretch reads KLDKENALDRAEQAEAEQKQAEERSKQLE. Threonine 53 carries the post-translational modification Phosphothreonine. A phosphoserine mark is found at serine 61 and serine 87. A Phosphothreonine modification is found at threonine 108. Phosphoserine is present on residues serine 206 and serine 215. Leucine 228 carries the post-translational modification N6-acetyllysine. Threonine 252 carries the phosphothreonine modification. Tyrosine 261 carries the post-translational modification Phosphotyrosine. Serine 271 carries the phosphoserine modification. Residue threonine 282 is modified to Phosphothreonine. Position 283 is a phosphoserine (serine 283).

This sequence belongs to the tropomyosin family. As to quaternary structure, homodimer. Heterodimer of an alpha (TPM1, TPM3 or TPM4) and a beta (TPM2) chain. Interacts with TMOD1. Interacts with TNNT1.

The protein resides in the cytoplasm. Its subcellular location is the cytoskeleton. Functionally, binds to actin filaments in muscle and non-muscle cells. Plays a central role, in association with the troponin complex, in the calcium dependent regulation of vertebrate striated muscle contraction. Smooth muscle contraction is regulated by interaction with caldesmon. In non-muscle cells is implicated in stabilizing cytoskeleton actin filaments. The protein is Tropomyosin alpha-3 chain (TPM3) of Bos taurus (Bovine).